Here is a 149-residue protein sequence, read N- to C-terminus: Large ribosomal subunit protein uL13 (149 aa).

It belongs to the universal ribosomal protein uL13 family. In terms of assembly, part of the 50S ribosomal subunit.

Functionally, this protein is one of the early assembly proteins of the 50S ribosomal subunit, although it is not seen to bind rRNA by itself. It is important during the early stages of 50S assembly. In Bifidobacterium longum subsp. infantis (strain ATCC 15697 / DSM 20088 / JCM 1222 / NCTC 11817 / S12), this protein is Large ribosomal subunit protein uL13.